Here is a 574-residue protein sequence, read N- to C-terminus: Potassium-transporting ATPase potassium-binding subunit (574 aa).

The next 10 membrane-spanning stretches (helical) occupy residues 7-27, 65-85, 136-156, 175-195, 264-284, 292-312, 390-410, 427-447, 494-514, and 534-554; these read IELG…GTHL, IEYA…SYLI, FGLA…AAAL, LIRI…IILL, FVEM…FGLS, WSIW…CFIF, GLYG…LMIG, MAVL…ALAL, LLLG…ILAI, and GWLF…LNFF.

The protein belongs to the KdpA family. As to quaternary structure, the system is composed of three essential subunits: KdpA, KdpB and KdpC.

The protein resides in the cell inner membrane. Its function is as follows. Part of the high-affinity ATP-driven potassium transport (or Kdp) system, which catalyzes the hydrolysis of ATP coupled with the electrogenic transport of potassium into the cytoplasm. This subunit binds the periplasmic potassium ions and delivers the ions to the membrane domain of KdpB through an intramembrane tunnel. The sequence is that of Potassium-transporting ATPase potassium-binding subunit from Methylacidiphilum infernorum (isolate V4) (Methylokorus infernorum (strain V4)).